A 160-amino-acid polypeptide reads, in one-letter code: Leucokinin (160 aa).

A signal peptide spans 1 to 19 (MAKIVLCMVLLAFGRQVYG). A propeptide spanning residues 20 to 130 (ASLVPAPISE…RIKSQLQRDE (111 aa)) is cleaved from the precursor. G147 carries the post-translational modification Glycine amide. Positions 151–160 (SPEPPILPDY) are excised as a propeptide.

The protein localises to the secreted. In terms of biological role, acts through intracellular calcium in Malpighian tubule stellate cells to raise chloride conductance. The chain is Leucokinin (Lk) from Drosophila melanogaster (Fruit fly).